The chain runs to 355 residues: 6-aminohexanoate-oligomer endohydrolase (355 aa).

T267 functions as the Nucleophile in the catalytic mechanism.

The protein belongs to the peptidase S58 family. In terms of assembly, heterotetramer composed of 4 alpha/beta heterodimers. Expressed as an inactive precursor that is cleaved autocatalytically at Asn266/Thr267 to generate an active enzyme composed of an alpha subunit and a beta subunit.

It catalyses the reaction [N-(6-aminohexanoyl)]n + H2O = [N-(6-aminohexanoyl)]n-x + [N-(6-aminohexanoyl)]x.. It functions in the pathway xenobiotic degradation; nylon-6 oligomer degradation. In terms of biological role, involved in the degradation of nylon-6 oligomers. Degrades cyclic and linear oligomers of 6-aminohexanoate (Ahx) with a degree of polymerization greater than three by an endo-type mode. Cannot use Ahx cyclic dimer or the Ahx linear dimer. This is 6-aminohexanoate-oligomer endohydrolase from Kocuria sp. (strain KY2).